Reading from the N-terminus, the 37-residue chain is PDGRNAAAKAFDLITPTVRKGCCSNPACILNNPNQCG.

A propeptide spanning residues 1 to 20 (PDGRNAAAKAFDLITPTVRK) is cleaved from the precursor. 2 disulfides stabilise this stretch: cysteine 22-cysteine 28 and cysteine 23-cysteine 36. The residue at position 36 (cysteine 36) is a Cysteine amide.

It belongs to the conotoxin A superfamily. In terms of tissue distribution, expressed by the venom duct.

It localises to the secreted. Functionally, alpha-conotoxins bind to the nicotinic acetylcholine receptors (nAChR) and inhibit them. This toxin inhibits mammalian alpha-3-beta-2/CHRNA3-CHRNB2 nAChR (IC(50)=9.4 nM (rat), IC(50)=8.8 nM (human)), as well as the subunit chimera alpha-6/alpha-3-beta-2-beta-3 nAChR (CHRNA6/CHRNA3-CHRNB2-CHRNB3)(IC(50)=2.1 nM (rat), IC(50)=1.7 nM (human)). Binds to rat alpha-6/alpha-3-beta-2-beta-3 more rapidly than to alpha-3-beta-2, and dissociates more rapidly from alpha-3-beta-2 than from alpha-6/alpha-3-beta-2-beta-3. The protein is Conotoxin Bt1.8 of Conus betulinus (Beech cone).